We begin with the raw amino-acid sequence, 137 residues long: Transcription antitermination protein NusB (137 aa).

It belongs to the NusB family.

Involved in transcription antitermination. Required for transcription of ribosomal RNA (rRNA) genes. Binds specifically to the boxA antiterminator sequence of the ribosomal RNA (rrn) operons. The protein is Transcription antitermination protein NusB of Proteus mirabilis (strain HI4320).